Reading from the N-terminus, the 2000-residue chain is MPGHRGAPHLPPWVCGLCSMDDFAEGGLSLADDILLEDYPYEDDCICTPDFTTDDYVRVTQLYYEGVGMQYKDYAQSEKNLEYDICNIWCSKPLSILQDYCDAIKLYIFWPLLFQHQHSSIISRLHPCVEAIRSRAAEISLKKLQHLELMEDIVDLAKKVANDSFLIEGLLKIGYKIENKILAMEDALNWIKYTGDVTILPKLGSVDSGWPMLSIFFTEYKYHITRVVTENCNLLEEFRRHSCMQCVKQGELMKMRGNEEFAKEKFEIAVIYYTRAIEYRPENHLLYGNRALCFLRMGQFRNALSDGKRAIVLKNTWPKGHYRYCDALSMLGEYDWALQANIKAQKLCKNDPEGIKDLIQQHIKLQKQIEDLQGRTSNRNPIKAFYESRAYIPRNSSAPAFRTSLNFVETERGFRKTKYRMANGGGHQNQKVADEALKGDDCDCHPEFLPPPSQPPRHKGKQKSRNNESEKPSSNSQVTLQVDLKSILEKQFSKSSRAAHQDFANIMKMLRSLIQDGYTALLEQRCRSAAQAFTELLNGLDPQKIKQLNLAMINYVLVVYGLAVSLLGIGRPEELSEAENQFKRIIEHYPNEGLDCLAYCGIGKVYLKKNRFLEALNHFEKAKTLICRLPGILTWPTSNVIIEESKPEKVKVMLEKFVEECKFPPVPDAVCCYQKCRGFSKIQIYLTDPDFKGFIRISCCQYCKVEFHMNCWKKLKTTTFNDKIDKDFLQGICLTPDCEGIISKIIIFSSGGQVKCEFEHKVVKEKAPSRPVLKQKCSSLEKLRLKEDKKLKRKIQKQEAKKLAQERMEEDLRESNPPKPEEPEETVESAQSCQFLDDRILQCIKQNADKIKSVVLNTSTLLKELLSWKVLSTEDYTTCFSSKNFVHEAVDYVIGHLIQEKNRVKTRIFLHVLSELKELDPKLAPWIQRLNSFGLDATGPFFTRYGASLKELDFNIVTFLWSEKYGHKLGSIEGKQLDYFCEPASVMEARCLIWLLEEHRDKFPALHSALDEFFDIMDSRCTVLRKQDSDEMPFGCIKVKNKGKKKKPKDSKPMLVGSGTASVTPSSETVTPEDHNRRNSDSAGPFAVPDHLRQDVEEFEALYDQHSSEYVVRNKKLWDINPKQKCSTLYDYFSQLLEEHGPLDMSDRMFSEEYEFFPEETRQILEKAGGLKSFLLGCPRFVVIDNCIALKKVASRLKKKRKKKNIKTKVEEISKTGEYLRVKLPLNPTAREFQPDVKSEAAAEDVTSIPGPADSSAPAAEDLKPQLDSDSSSGSASEDSRLEVVSPDLPTPLCEDASPSPTPAPEDAKPTYWTQSHLVTGFCTYLPFQGFGIAQSRPAYINMVPSLSQFTSIYTPLANISSEYPMPRSMPVVPSFVASERADGNAAAYFESHRLNTENASDDHTASETQILEGPLGMCVKSQSSTADARTALSEPEGNSRHSGSSDSLWEASLENVSGITDVPPAPSVAIQVSRSLIHQEVNTEPYAPFERQQGDLSQKEKECHLLREQLQVACEECEQMELRSSQETRDLEEKLQRHAEENKVSLPELQWALGKLDREIKKWHQEKKEIQERLKALKKKIKKVINTSDMSAQKNDGLDKECESQPDQSLGISSALTDEKAKVEESVRKGKELYEESQQRAVAAEVSVLENWKEREVCKLQGVATQAEACLKSLKLMNSDSAAYPDVECDILSWETFLSTVTEEIENTKCQFEEQIKAIKSGSRLSDLSSVQVSELLFPACSMIHPQLLSESSRHEDHGLVACVDSMTGAVLNDPYVGPDSGCSEEVPELSLGSPTHHPEGAQQLEVKKASQVSPSEQNPEADEKPSGQATRSSQSQKNPFNSIIEHLSVIFPCYASSELSGFIKKVRNKSKNSFSGLSIEEIVERVTEHIVEEQKKKKPNPGKDKKTSEAHPAASVSKSSPSPPLAAAGPSAKTKGQKKDDVPAPDGNSCQICHEIFKSKNMRVLKCGHKFHKGCFKQWLKGQSTCPTCGSSDLLSEE.

Residues 20 to 249 (MDDFAEGGLS…RHSCMQCVKQ (230 aa)) are interaction with POLG. TPR repeat units lie at residues 250 to 283 (GELM…RPEN) and 284 to 317 (HLLY…KNTW). Phosphoserine is present on Ser-397. Residues 442-478 (CDCHPEFLPPPSQPPRHKGKQKSRNNESEKPSSNSQV) form a disordered region. TPR repeat units lie at residues 556 to 592 (VLVV…YPNE) and 596 to 629 (CLAY…ICRL). A disordered region spans residues 804–828 (AQERMEEDLRESNPPKPEEPEETVE). Position 1029 is a phosphoserine (Ser-1029). 5 disordered regions span residues 1041–1087 (NKGK…GPFA), 1233–1308 (FQPD…PEDA), 1423–1448 (QSST…SSDS), 1806–1839 (LEVK…QSQK), and 1894–1947 (EEQK…VPAP). The span at 1059–1070 (GTASVTPSSETV) shows a compositional bias: polar residues. Phosphoserine is present on Ser-1080. Residues 1268 to 1277 (DSDSSSGSAS) show a composition bias toward low complexity. A compositionally biased stretch (polar residues) spans 1829–1839 (GQATRSSQSQK). The segment covering 1894–1911 (EEQKKKKPNPGKDKKTSE) has biased composition (basic and acidic residues). Residues 1912–1934 (AHPAASVSKSSPSPPLAAAGPSA) show a composition bias toward low complexity. An RING-type; atypical zinc finger spans residues 1952 to 1991 (CQICHEIFKSKNMRVLKCGHKFHKGCFKQWLKGQSTCPTC).

As to quaternary structure, interacts (when phosphorylated on Ser-397) with AKT1, AKT2 and AKT3 (when phosphorylated). Interacts with CIT. Interacts with POLG. Interacts with HSP70. Interacts with SMURF2. Post-translationally, phosphorylation on Ser-397 by Akt is required for ubiquitin ligase activity. In terms of processing, proteolytically cleaved into differently sized N- and C-terminal fragments.

Its subcellular location is the nucleus. It is found in the cytoplasm. The protein localises to the golgi apparatus. The enzyme catalyses S-ubiquitinyl-[E2 ubiquitin-conjugating enzyme]-L-cysteine + [acceptor protein]-L-lysine = [E2 ubiquitin-conjugating enzyme]-L-cysteine + N(6)-ubiquitinyl-[acceptor protein]-L-lysine.. It functions in the pathway protein modification; protein ubiquitination. Its function is as follows. E3 ubiquitin-protein ligase which catalyzes the formation of 'Lys-48'-polyubiquitin chains. Mediates the ubiquitination and subsequent degradation of phosphorylated Akt (AKT1, AKT2 and AKT3) in the nucleus. Acts as a terminal regulator of Akt signaling after activation; its phosphorylation by Akt, which is a prerequisite for ubiquitin ligase activity, suggests the existence of a regulation mechanism required to control Akt levels after activation. Positively regulates TGFB1-induced epithelial-mesenchymal transition and myofibroblast differentiation by mediating the ubiquitination and subsequent degradation of SMURF2. Regulates neuronal differentiation by regulating actin remodeling and Golgi organization via a signaling cascade involving RHOA, CIT and ROCK. Inhibits cell proliferation. The polypeptide is E3 ubiquitin-protein ligase TTC3 (Rattus norvegicus (Rat)).